A 107-amino-acid chain; its full sequence is uncharacterized protein (107 aa).

This is an uncharacterized protein from Yersinia pseudotuberculosis serotype I (strain IP32953).